A 573-amino-acid chain; its full sequence is Septation ring formation regulator EzrA (573 aa).

Residues methionine 1–glutamine 2 are Extracellular-facing. A helical transmembrane segment spans residues valine 3–phenylalanine 21. At glutamine 22–alanine 573 the chain is on the cytoplasmic side. Coiled coils occupy residues aspartate 100 to alanine 188, leucine 317 to alanine 364, and glutamate 416 to glutamate 488.

It belongs to the EzrA family.

The protein resides in the cell membrane. In terms of biological role, negative regulator of FtsZ ring formation; modulates the frequency and position of FtsZ ring formation. Inhibits FtsZ ring formation at polar sites. Interacts either with FtsZ or with one of its binding partners to promote depolymerization. The chain is Septation ring formation regulator EzrA from Lactiplantibacillus plantarum (strain ATCC BAA-793 / NCIMB 8826 / WCFS1) (Lactobacillus plantarum).